Reading from the N-terminus, the 560-residue chain is Triacylglyceride transporter MSMEG_3069/MSMEI_2992 (560 aa).

The next 14 membrane-spanning stretches (helical) occupy residues 16–36, 48–68, 78–98, 108–128, 143–163, 168–188, 200–220, 229–249, 269–289, 307–327, 336–356, 368–388, 411–431, and 477–497; these read LAVL…VDIM, QVTP…PLLG, MLIQ…ALSS, IIQG…AADL, AAQE…VWLF, AVFW…HFSL, VDVI…VGLY, VLPS…VAFF, PFLA…VTLV, AFLL…GGWL, VVLI…HWSV, FTLP…GLVI, VVVA…AWGF, and IFLS…LISG. The segment at 362-371 is beta-hairpin; it reads RHNLGLFTLP. Residues 519-560 form a disordered region; that stretch reads IDPYDAGDADDAPTEMLDLPTQVLSAPPSDPGDERPGRHRAP.

The protein belongs to the major facilitator superfamily. P55 (TC 2.A.1.3.34) family.

The protein localises to the cell inner membrane. With respect to regulation, resistance to ethidium bromide is inhibited by reserpine. Its function is as follows. In association with lipoprotein LprG transports triacyglycerides (TAG) across the inner cell membrane into the periplasm; TAG probably regulates lipid metabolism and growth regulation and plays a structural role in the outer membrane. TAG (and maybe other lipids) enters the central cavity of the P55 transporter from within the cell inner membrane via clefts on the cytoplasmic face of P55 between TM5-TM8 and TM2-TM11. From there the lipid is probably transferred to the hydrophobic cavity of LprG. Confers resistance to ethidium bromide, possibly acting as an efflux pump, requires LprG lipoprotein for normal function. Export of ethidium bromide can be complemented by the equivalent operon from M.tuberculosis (lprG-Rv1410c). Involved in drug susceptibilty, its expression alone partially complements the antibiotic susceptibilty of a double lprG-mfs deletion. Probably does not function as a bona fide drug efflux pump, but instead plays a role in outer membrane biogenesis. Probably required with LprG for normal surface localization of lipoarabinomannan (LAM). This chain is Triacylglyceride transporter MSMEG_3069/MSMEI_2992, found in Mycolicibacterium smegmatis (strain ATCC 700084 / mc(2)155) (Mycobacterium smegmatis).